We begin with the raw amino-acid sequence, 545 residues long: Chaperonin GroEL 1 (545 aa).

Residues 30-33 (TLGP), Lys51, 87-91 (DGTTT), Gly415, and Asp496 each bind ATP.

It belongs to the chaperonin (HSP60) family. Forms a cylinder of 14 subunits composed of two heptameric rings stacked back-to-back. Interacts with the co-chaperonin GroES.

Its subcellular location is the cytoplasm. It carries out the reaction ATP + H2O + a folded polypeptide = ADP + phosphate + an unfolded polypeptide.. Functionally, together with its co-chaperonin GroES, plays an essential role in assisting protein folding. The GroEL-GroES system forms a nano-cage that allows encapsulation of the non-native substrate proteins and provides a physical environment optimized to promote and accelerate protein folding. This chain is Chaperonin GroEL 1, found in Nitrobacter hamburgensis (strain DSM 10229 / NCIMB 13809 / X14).